A 246-amino-acid polypeptide reads, in one-letter code: Pyridoxine 5'-phosphate synthase (246 aa).

Asn7 contributes to the 3-amino-2-oxopropyl phosphate binding site. 9–10 (DH) lines the 1-deoxy-D-xylulose 5-phosphate pocket. Arg18 contacts 3-amino-2-oxopropyl phosphate. His43 acts as the Proton acceptor in catalysis. 1-deoxy-D-xylulose 5-phosphate contacts are provided by Arg45 and His50. The Proton acceptor role is filled by Glu70. Thr100 lines the 1-deoxy-D-xylulose 5-phosphate pocket. Catalysis depends on His190, which acts as the Proton donor. 3-amino-2-oxopropyl phosphate contacts are provided by residues Gly191 and 212 to 213 (GH).

Belongs to the PNP synthase family. As to quaternary structure, homooctamer; tetramer of dimers.

The protein localises to the cytoplasm. It catalyses the reaction 3-amino-2-oxopropyl phosphate + 1-deoxy-D-xylulose 5-phosphate = pyridoxine 5'-phosphate + phosphate + 2 H2O + H(+). Its pathway is cofactor biosynthesis; pyridoxine 5'-phosphate biosynthesis; pyridoxine 5'-phosphate from D-erythrose 4-phosphate: step 5/5. Its function is as follows. Catalyzes the complicated ring closure reaction between the two acyclic compounds 1-deoxy-D-xylulose-5-phosphate (DXP) and 3-amino-2-oxopropyl phosphate (1-amino-acetone-3-phosphate or AAP) to form pyridoxine 5'-phosphate (PNP) and inorganic phosphate. In Bordetella petrii (strain ATCC BAA-461 / DSM 12804 / CCUG 43448), this protein is Pyridoxine 5'-phosphate synthase.